The primary structure comprises 95 residues: Alpha-defensin 20 (95 aa).

Residues 1-19 (MKTLVLLSALVLLAFQVQA) form the signal peptide. A propeptide spanning residues 20–58 (DPIQNTDEETNTEEQPGEEDQAVSVSFGDPEGSALHEKS) is cleaved from the precursor. Residues 22-57 (IQNTDEETNTEEQPGEEDQAVSVSFGDPEGSALHEK) form a disordered region. Residues 25–40 (TDEETNTEEQPGEEDQ) are compositionally biased toward acidic residues. 3 disulfides stabilise this stretch: cysteine 64-cysteine 89, cysteine 66-cysteine 81, and cysteine 71-cysteine 88.

It belongs to the alpha-defensin family.

It is found in the secreted. Its function is as follows. May have microbicidal activities. This Mus musculus (Mouse) protein is Alpha-defensin 20 (Defa20).